The following is a 220-amino-acid chain: Uracil-DNA glycosylase (220 aa).

Residue Asp-60 is the Proton acceptor of the active site.

This sequence belongs to the uracil-DNA glycosylase (UDG) superfamily. UNG family.

It is found in the cytoplasm. It carries out the reaction Hydrolyzes single-stranded DNA or mismatched double-stranded DNA and polynucleotides, releasing free uracil.. Excises uracil residues from the DNA which can arise as a result of misincorporation of dUMP residues by DNA polymerase or due to deamination of cytosine. This Francisella tularensis subsp. novicida (strain U112) protein is Uracil-DNA glycosylase.